The following is a 1207-amino-acid chain: DNA-directed RNA polymerase subunit beta' (1207 aa).

Residues Cys60, Cys62, Cys75, and Cys78 each contribute to the Zn(2+) site. Positions 449, 451, and 453 each coordinate Mg(2+). Zn(2+) is bound by residues Cys822, Cys896, Cys903, and Cys906.

This sequence belongs to the RNA polymerase beta' chain family. As to quaternary structure, the RNAP catalytic core consists of 2 alpha, 1 beta, 1 beta' and 1 omega subunit. When a sigma factor is associated with the core the holoenzyme is formed, which can initiate transcription. It depends on Mg(2+) as a cofactor. Requires Zn(2+) as cofactor.

The catalysed reaction is RNA(n) + a ribonucleoside 5'-triphosphate = RNA(n+1) + diphosphate. In terms of biological role, DNA-dependent RNA polymerase catalyzes the transcription of DNA into RNA using the four ribonucleoside triphosphates as substrates. The polypeptide is DNA-directed RNA polymerase subunit beta' (Staphylococcus epidermidis (strain ATCC 35984 / DSM 28319 / BCRC 17069 / CCUG 31568 / BM 3577 / RP62A)).